A 124-amino-acid chain; its full sequence is Small ribosomal subunit protein uS12 (124 aa).

D89 carries the post-translational modification 3-methylthioaspartic acid. The tract at residues 103–124 (DTAGVQKRRQGRSKYGAKRPKS) is disordered. Residues 108-124 (QKRRQGRSKYGAKRPKS) are compositionally biased toward basic residues.

This sequence belongs to the universal ribosomal protein uS12 family. As to quaternary structure, part of the 30S ribosomal subunit. Contacts proteins S8 and S17. May interact with IF1 in the 30S initiation complex.

Functionally, with S4 and S5 plays an important role in translational accuracy. In terms of biological role, interacts with and stabilizes bases of the 16S rRNA that are involved in tRNA selection in the A site and with the mRNA backbone. Located at the interface of the 30S and 50S subunits, it traverses the body of the 30S subunit contacting proteins on the other side and probably holding the rRNA structure together. The combined cluster of proteins S8, S12 and S17 appears to hold together the shoulder and platform of the 30S subunit. The protein is Small ribosomal subunit protein uS12 of Methylococcus capsulatus (strain ATCC 33009 / NCIMB 11132 / Bath).